The primary structure comprises 432 residues: Ribosomal protein uS12 methylthiotransferase RimO (432 aa).

An MTTase N-terminal domain is found at 4 to 122 (NKVDIITLGC…LISDLGKSYH (119 aa)). Cys-13, Cys-51, Cys-85, Cys-146, Cys-150, and Cys-153 together coordinate [4Fe-4S] cluster. In terms of domain architecture, Radical SAM core spans 132–363 (TTPRHYAYVK…MRVQEGISAD (232 aa)). The region spanning 366 to 432 (ASKVGQTFRV…AFDLYGKVLN (67 aa)) is the TRAM domain.

This sequence belongs to the methylthiotransferase family. RimO subfamily. It depends on [4Fe-4S] cluster as a cofactor.

It is found in the cytoplasm. The catalysed reaction is L-aspartate(89)-[ribosomal protein uS12]-hydrogen + (sulfur carrier)-SH + AH2 + 2 S-adenosyl-L-methionine = 3-methylsulfanyl-L-aspartate(89)-[ribosomal protein uS12]-hydrogen + (sulfur carrier)-H + 5'-deoxyadenosine + L-methionine + A + S-adenosyl-L-homocysteine + 2 H(+). Catalyzes the methylthiolation of an aspartic acid residue of ribosomal protein uS12. The polypeptide is Ribosomal protein uS12 methylthiotransferase RimO (Parabacteroides distasonis (strain ATCC 8503 / DSM 20701 / CIP 104284 / JCM 5825 / NCTC 11152)).